A 454-amino-acid polypeptide reads, in one-letter code: Venom prothrombin activator porpharin-D (454 aa).

Residues 1-20 form the signal peptide; that stretch reads MAPQLLLCLILTFLWSLPEA. The propeptide occupies 21-40; it reads ESNVFLKSKEANRFLQRTKR. In terms of domain architecture, Gla spans 41–86; it reads SNSLFEEFRPGNIERECIEEKCSKEEAREIFKDNEKTEAFWNVYVD. 10 positions are modified to 4-carboxyglutamate: Glu46, Glu47, Glu54, Glu56, Glu59, Glu60, Glu65, Glu66, Glu69, and Glu75. A disulfide bridge links Cys57 with Cys62. Residues 86-122 enclose the EGF-like 1; calcium-binding domain; it reads DGDQCSSNPCHYGGTCKDGIGSYTCTCLPNYEGKNCE. 11 disulfide bridges follow: Cys90/Cys101, Cys95/Cys110, Cys112/Cys121, Cys129/Cys140, Cys136/Cys149, Cys151/Cys164, Cys172/Cys316, Cys216/Cys221, Cys236/Cys252, Cys364/Cys378, and Cys389/Cys417. Ser92 is a glycosylation site (O-linked (Hex...) serine). One can recognise an EGF-like 2 domain in the interval 129 to 164; it reads CRFFNGNCWHFCKPVQNDTQCSCAESYRLGDDGHSC. Residues 182–209 constitute a propeptide, activation peptide; the sequence is REASLPDFVQSQNATLLKKSDNPSPDIR. Positions 210-441 constitute a Peptidase S1 domain; the sequence is IINGMDCKLG…FIPWIKAVMR (232 aa). Active-site charge relay system residues include His251 and Asp296. Residue Ser393 is the Charge relay system of the active site.

It belongs to the peptidase S1 family. Snake venom subfamily. As to quaternary structure, heterodimer of a light chain and a heavy chain; disulfide-linked. In terms of processing, the vitamin K-dependent, enzymatic carboxylation of some glutamate residues allows the modified protein to bind calcium. In terms of tissue distribution, expressed by the venom gland.

Its subcellular location is the secreted. The enzyme catalyses Selective cleavage of Arg-|-Thr and then Arg-|-Ile bonds in prothrombin to form thrombin.. In terms of biological role, snake prothrombin activator that attacks the hemostatic system of prey. This protein is functionally similar to blood coagulation factor Xa. In Pseudechis porphyriacus (Red-bellied black snake), this protein is Venom prothrombin activator porpharin-D.